A 296-amino-acid polypeptide reads, in one-letter code: Small ribosomal subunit protein uS2 (296 aa).

The segment at 245–296 is disordered; the sequence is WEAPAAGFAGATGTGWDGAAGDEWGAAPATTEWAASAAPAAASGEAAKETTW. Over residues 263–289 the composition is skewed to low complexity; sequence AAGDEWGAAPATTEWAASAAPAAASGE.

The protein belongs to the universal ribosomal protein uS2 family. As to quaternary structure, component of the small ribosomal subunit. Mature ribosomes consist of a small (40S) and a large (60S) subunit. The 40S subunit contains about 33 different proteins and 1 molecule of RNA (18S). The 60S subunit contains about 49 different proteins and 3 molecules of RNA (25S, 5.8S and 5S). Interacts with RPS21.

Its subcellular location is the cytoplasm. Its function is as follows. Required for the assembly and/or stability of the 40S ribosomal subunit. Required for the processing of the 20S rRNA-precursor to mature 18S rRNA in a late step of the maturation of 40S ribosomal subunits. This Fusarium vanettenii (strain ATCC MYA-4622 / CBS 123669 / FGSC 9596 / NRRL 45880 / 77-13-4) (Fusarium solani subsp. pisi) protein is Small ribosomal subunit protein uS2.